Consider the following 151-residue polypeptide: FAD synthase (151 aa).

ATP is bound by residues 12–13 (TF), 17–20 (HPGH), aspartate 97, and tyrosine 125.

The protein belongs to the archaeal FAD synthase family. As to quaternary structure, homodimer. A divalent metal cation serves as cofactor.

The enzyme catalyses FMN + ATP + H(+) = FAD + diphosphate. The protein operates within cofactor biosynthesis; FAD biosynthesis; FAD from FMN: step 1/1. Its function is as follows. Catalyzes the transfer of the AMP portion of ATP to flavin mononucleotide (FMN) to produce flavin adenine dinucleotide (FAD) coenzyme. The polypeptide is FAD synthase (Methanococcus vannielii (strain ATCC 35089 / DSM 1224 / JCM 13029 / OCM 148 / SB)).